A 483-amino-acid chain; its full sequence is ATP synthase subunit beta (483 aa).

Position 169-176 (169-176 (GGAGVGKT)) interacts with ATP.

The protein belongs to the ATPase alpha/beta chains family. In terms of assembly, F-type ATPases have 2 components, CF(1) - the catalytic core - and CF(0) - the membrane proton channel. CF(1) has five subunits: alpha(3), beta(3), gamma(1), delta(1), epsilon(1). CF(0) has three main subunits: a(1), b(2) and c(9-12). The alpha and beta chains form an alternating ring which encloses part of the gamma chain. CF(1) is attached to CF(0) by a central stalk formed by the gamma and epsilon chains, while a peripheral stalk is formed by the delta and b chains.

The protein resides in the cell membrane. It carries out the reaction ATP + H2O + 4 H(+)(in) = ADP + phosphate + 5 H(+)(out). Functionally, produces ATP from ADP in the presence of a proton gradient across the membrane. The catalytic sites are hosted primarily by the beta subunits. This chain is ATP synthase subunit beta, found in Rhodococcus opacus (strain B4).